The chain runs to 700 residues: Small ribosomal subunit protein uS3c (700 aa).

Insert stretches follow at residues 88-196 (NCHM…LGKF) and 282-587 (KPCT…FQTR).

Belongs to the universal ribosomal protein uS3 family. As to quaternary structure, part of the 30S ribosomal subunit.

It localises to the plastid. It is found in the chloroplast. The sequence is that of Small ribosomal subunit protein uS3c (rps3) from Tetradesmus obliquus (Green alga).